We begin with the raw amino-acid sequence, 471 residues long: MQKSTNSDIPVETLNPTRQGTGAVQMRIKNANSHHDRLSQSKSMILTEVGKVTEPISRHRRNHSQHILKDVIPPLEQLMVEKEGYLQKAKIADGGKKLRKNWTTSWIVLSSRKIEFYKESKQQALSNMKTGNKPESVDLCGAHIEWAKEKSSRKNVFQITTLSGNEFLLQSDIDFIILDWFHAIKNAIDRLPKDPSSHSRNLELFKIQRSSSTELLSHYDSDTKEQKPEHRKSLMFRLHHSASDTSDKNRVKSRLKKFITRRPSLKTLQEKGLIKDQIFGSHLHTLCEREKSTVPRFVKQCIEAVEKRGLDVDGIYRVSGNLATIQKLRFIVNQEEKLNLDDSQWEDIHVVTGALKMFFRDLPEPLFPYSFFEQFVEAIKKQDNNTRIEAIKSLVQKLPPPNRDTMKVLFGHLTKIVARASKNLMSTHSLGIVFGPTLLRAEDESGNMAVHMVYQNQIAELMLSAYDQIFS.

Residues 1–20 form a disordered region; sequence MQKSTNSDIPVETLNPTRQG. Phosphoserine is present on Ser43. In terms of domain architecture, PH spans 79-189; that stretch reads MVEKEGYLQK…WFHAIKNAID (111 aa). A phosphoserine mark is found at Ser196, Ser199, and Ser243. The region spanning 281 to 470 is the Rho-GAP domain; the sequence is SHLHTLCERE…LMLSAYDQIF (190 aa).

Its subcellular location is the cytoplasm. It localises to the membrane. Its function is as follows. GTPase activator for the Rho-type GTPases by converting them to an inactive GDP-bound state. Has activity toward RAC1. Overexpression results in an increase in actin stress fibers and cell contraction. The sequence is that of Rho GTPase-activating protein 15 (ARHGAP15) from Bos taurus (Bovine).